The following is a 306-amino-acid chain: MVLSSELLTSILDEVRPLLGQGKVADYIPALAQVPADRLGIAVCTVEGELFTAGDASEPFSIQSISKALSLTLALTLYQEEEIWARVGKEPSGQPFNSLVQLEFEQGIPRNPFINAGALVVSDLLETRLTAPRQRTLELVRRLSGNPAIMADQVVARSEYQHSARNAAIAYLMKAYGNFENEVDKVLQSYFNACAIRMSCVDLARAFIYLANRGVPLGATTPLLPARTTKQVNALLATCGLYDEAGDFAYRVGMPGKSGVGGGIIALIPGELCVCVWSPELNKAGNSLAGTAALELLAERLGRSIF.

The substrate site is built by Ser-64, Asn-115, Glu-159, Asn-166, Tyr-190, Tyr-242, and Val-260.

Belongs to the glutaminase family. As to quaternary structure, homotetramer.

It catalyses the reaction L-glutamine + H2O = L-glutamate + NH4(+). The polypeptide is Glutaminase (Aeromonas hydrophila subsp. hydrophila (strain ATCC 7966 / DSM 30187 / BCRC 13018 / CCUG 14551 / JCM 1027 / KCTC 2358 / NCIMB 9240 / NCTC 8049)).